A 635-amino-acid chain; its full sequence is Threonine--tRNA ligase (635 aa).

Residues 1–62 enclose the TGS domain; it reads MITITLPDGS…EHDAILRIIT (62 aa). The catalytic stretch occupies residues 244-535; that stretch reads DHRKIGKAQD…LIEHYAGIWP (292 aa). Positions 335, 386, and 512 each coordinate Zn(2+).

The protein belongs to the class-II aminoacyl-tRNA synthetase family. As to quaternary structure, homodimer. Zn(2+) serves as cofactor.

It localises to the cytoplasm. The catalysed reaction is tRNA(Thr) + L-threonine + ATP = L-threonyl-tRNA(Thr) + AMP + diphosphate + H(+). In terms of biological role, catalyzes the attachment of threonine to tRNA(Thr) in a two-step reaction: L-threonine is first activated by ATP to form Thr-AMP and then transferred to the acceptor end of tRNA(Thr). Also edits incorrectly charged L-seryl-tRNA(Thr). This is Threonine--tRNA ligase from Xylella fastidiosa (strain M12).